The sequence spans 109 residues: Nucleoid-associated protein VC_1055 (109 aa).

Residues 1-22 form a disordered region; the sequence is MFGKGGMGNLMKQAQQMQERMQ.

It belongs to the YbaB/EbfC family. As to quaternary structure, homodimer.

It is found in the cytoplasm. Its subcellular location is the nucleoid. Its function is as follows. Binds to DNA and alters its conformation. May be involved in regulation of gene expression, nucleoid organization and DNA protection. The polypeptide is Nucleoid-associated protein VC_1055 (Vibrio cholerae serotype O1 (strain ATCC 39315 / El Tor Inaba N16961)).